The chain runs to 108 residues: Class I hydrophobin 3 (108 aa).

The first 17 residues, 1-17 (MFFQTTIVAALASLAVA), serve as a signal peptide directing secretion. 4 disulfides stabilise this stretch: cysteine 28/cysteine 87, cysteine 35/cysteine 81, cysteine 36/cysteine 69, and cysteine 88/cysteine 101. An N-linked (GlcNAc...) asparagine glycan is attached at asparagine 37.

It belongs to the fungal hydrophobin family. In terms of assembly, self-assembles to form functional amyloid fibrils called rodlets. Self-assembly into fibrillar rodlets occurs spontaneously at hydrophobic:hydrophilic interfaces and the rodlets further associate laterally to form amphipathic monolayers.

The protein resides in the secreted. Its subcellular location is the cell wall. Functionally, aerial growth, conidiation, and dispersal of filamentous fungi in the environment rely upon a capability of their secreting small amphipathic proteins called hydrophobins (HPBs) with low sequence identity. Class I can self-assemble into an outermost layer of rodlet bundles on aerial cell surfaces, conferring cellular hydrophobicity that supports fungal growth, development and dispersal; whereas Class II form highly ordered films at water-air interfaces through intermolecular interactions but contribute nothing to the rodlet structure. Vmh3 is a class I hydrophobin that is essential for the maintenance of the surface hydrophobicity of the mycelium and might be involved in the development of fruiting bodies. Plays an important role in hyphal resistance against environmental stress. Necessary for the efficient biodegradation of lignin. The sequence is that of Class I hydrophobin 3 from Pleurotus ostreatus (strain PC15) (Oyster mushroom).